A 1468-amino-acid polypeptide reads, in one-letter code: ABC transporter G family member 34 (1468 aa).

The interval 33-53 (NGAFSRSSSSSSRRMRGEEDD) is disordered. One can recognise an ABC transporter 1 domain in the interval 178–450 (ANALGILPTR…FELMGFKCPE (273 aa)). 211 to 218 (GPPGSGKT) contacts ATP. One can recognise an ABC transmembrane type-2 1 domain in the interval 528–741 (ELLKANIDRE…AQNAVSVNEF (214 aa)). 6 helical membrane passes run 546 to 566 (FVYI…MTVF), 575 to 595 (SVAD…MIML), 634 to 654 (SPMS…VIGF), 666 to 686 (LLML…GGAA), 690 to 710 (IVAN…GGFI), and 778 to 798 (IGFG…TLAL). In terms of domain architecture, ABC transporter 2 spans 871–1123 (LTFEDIKYSV…ELIKYFEGIQ (253 aa)). Residue 916-923 (GVSGAGKT) participates in ATP binding. Residues 1196–1410 (IQCLACLWKQ…TLYGLIVSQY (215 aa)) form the ABC transmembrane type-2 2 domain. 7 helical membrane-spanning segments follow: residues 1217-1237 (AIRL…FWDL), 1247-1267 (LFNA…LNGQ), 1303-1323 (FPYT…MIGF), 1330-1350 (FFWY…YGMM), 1360-1380 (VASI…GFVI), 1387-1407 (VWWR…GLIV), and 1440-1460 (FVAV…GFAI).

It belongs to the ABC transporter superfamily. ABCG family. PDR (TC 3.A.1.205) subfamily.

It localises to the membrane. May be a general defense protein. The sequence is that of ABC transporter G family member 34 from Oryza sativa subsp. japonica (Rice).